The following is a 307-amino-acid chain: Homoserine O-acetyltransferase (307 aa).

The Acyl-thioester intermediate role is filled by C142. The substrate site is built by K163 and S192. The active-site Proton acceptor is H235. Residue E237 is part of the active site. Substrate is bound at residue R249.

It belongs to the MetA family.

The protein localises to the cytoplasm. The catalysed reaction is L-homoserine + acetyl-CoA = O-acetyl-L-homoserine + CoA. It functions in the pathway amino-acid biosynthesis; L-methionine biosynthesis via de novo pathway; O-acetyl-L-homoserine from L-homoserine: step 1/1. In terms of biological role, transfers an acetyl group from acetyl-CoA to L-homoserine, forming acetyl-L-homoserine. The polypeptide is Homoserine O-acetyltransferase (Sinorhizobium fredii (strain NBRC 101917 / NGR234)).